Here is a 719-residue protein sequence, read N- to C-terminus: Phosphoribosylformylglycinamidine synthase subunit PurL (719 aa).

His-45 is a catalytic residue. The ATP site is built by Tyr-48 and Lys-87. Glu-89 lines the Mg(2+) pocket. Substrate is bound by residues 90 to 93 (SHNH) and Arg-112. His-91 functions as the Proton acceptor in the catalytic mechanism. Residue Asp-113 participates in Mg(2+) binding. Gln-236 lines the substrate pocket. Asp-264 is a binding site for Mg(2+). 308–310 (ESQ) contributes to the substrate binding site. 2 residues coordinate ATP: Asn-493 and Gly-530. Residue Asn-531 coordinates Mg(2+). Position 533 (Ser-533) interacts with substrate.

Belongs to the FGAMS family. Monomer. Part of the FGAM synthase complex composed of 1 PurL, 1 PurQ and 2 PurS subunits.

Its subcellular location is the cytoplasm. The enzyme catalyses N(2)-formyl-N(1)-(5-phospho-beta-D-ribosyl)glycinamide + L-glutamine + ATP + H2O = 2-formamido-N(1)-(5-O-phospho-beta-D-ribosyl)acetamidine + L-glutamate + ADP + phosphate + H(+). It functions in the pathway purine metabolism; IMP biosynthesis via de novo pathway; 5-amino-1-(5-phospho-D-ribosyl)imidazole from N(2)-formyl-N(1)-(5-phospho-D-ribosyl)glycinamide: step 1/2. Part of the phosphoribosylformylglycinamidine synthase complex involved in the purines biosynthetic pathway. Catalyzes the ATP-dependent conversion of formylglycinamide ribonucleotide (FGAR) and glutamine to yield formylglycinamidine ribonucleotide (FGAM) and glutamate. The FGAM synthase complex is composed of three subunits. PurQ produces an ammonia molecule by converting glutamine to glutamate. PurL transfers the ammonia molecule to FGAR to form FGAM in an ATP-dependent manner. PurS interacts with PurQ and PurL and is thought to assist in the transfer of the ammonia molecule from PurQ to PurL. The protein is Phosphoribosylformylglycinamidine synthase subunit PurL of Novosphingobium aromaticivorans (strain ATCC 700278 / DSM 12444 / CCUG 56034 / CIP 105152 / NBRC 16084 / F199).